The chain runs to 55 residues: DNA-directed RNA polymerase subunit Rpo10 (55 aa).

Zn(2+) contacts are provided by Cys6, Cys9, Cys43, and Cys44.

Belongs to the archaeal Rpo10/eukaryotic RPB10 RNA polymerase subunit family. In terms of assembly, part of the RNA polymerase complex. The cofactor is Zn(2+).

Its subcellular location is the cytoplasm. The enzyme catalyses RNA(n) + a ribonucleoside 5'-triphosphate = RNA(n+1) + diphosphate. In terms of biological role, DNA-dependent RNA polymerase (RNAP) catalyzes the transcription of DNA into RNA using the four ribonucleoside triphosphates as substrates. The protein is DNA-directed RNA polymerase subunit Rpo10 of Methanothermobacter thermautotrophicus (strain ATCC 29096 / DSM 1053 / JCM 10044 / NBRC 100330 / Delta H) (Methanobacterium thermoautotrophicum).